The following is a 204-amino-acid chain: MAIPVVGLTGGIGSGKSAAADRFAELGVPVIDTDSIAHQLTGPGGAAMTEIVRVFGPGVVAGDGSLDRAAMRARVFAAPEERKRLEAILHPAIHAESVRRLQAAVGDYAVLVVPLLFESDRYAPLLARALVVDCSEEVQVERVMRRSKLSADAVRAIMAAQLPRSERLRRADDVIDNSGGLAELRLQVDAKHSYYLANLVKAML.

The DPCK domain occupies 5–204; the sequence is VVGLTGGIGS…YLANLVKAML (200 aa). 13 to 18 contacts ATP; it reads GSGKSA.

It belongs to the CoaE family.

It is found in the cytoplasm. It catalyses the reaction 3'-dephospho-CoA + ATP = ADP + CoA + H(+). Its pathway is cofactor biosynthesis; coenzyme A biosynthesis; CoA from (R)-pantothenate: step 5/5. Its function is as follows. Catalyzes the phosphorylation of the 3'-hydroxyl group of dephosphocoenzyme A to form coenzyme A. The polypeptide is Dephospho-CoA kinase (Chromobacterium violaceum (strain ATCC 12472 / DSM 30191 / JCM 1249 / CCUG 213 / NBRC 12614 / NCIMB 9131 / NCTC 9757 / MK)).